Reading from the N-terminus, the 436-residue chain is 3-ketoacyl-CoA thiolase (436 aa).

Catalysis depends on Cys-99, which acts as the Acyl-thioester intermediate. Residues His-392 and Cys-422 each act as proton acceptor in the active site.

It belongs to the thiolase-like superfamily. Thiolase family. Heterotetramer of two alpha chains (FadJ) and two beta chains (FadI).

Its subcellular location is the cytoplasm. The enzyme catalyses an acyl-CoA + acetyl-CoA = a 3-oxoacyl-CoA + CoA. Its pathway is lipid metabolism; fatty acid beta-oxidation. Its function is as follows. Catalyzes the final step of fatty acid oxidation in which acetyl-CoA is released and the CoA ester of a fatty acid two carbons shorter is formed. This is 3-ketoacyl-CoA thiolase from Escherichia coli O6:H1 (strain CFT073 / ATCC 700928 / UPEC).